Here is a 93-residue protein sequence, read N- to C-terminus: Small ribosomal subunit protein uS19 (93 aa).

This sequence belongs to the universal ribosomal protein uS19 family.

Protein S19 forms a complex with S13 that binds strongly to the 16S ribosomal RNA. The protein is Small ribosomal subunit protein uS19 of Blochmanniella floridana.